The following is a 321-amino-acid chain: Sporulation protein cse15 (321 aa).

2 coiled-coil regions span residues 37–70 and 108–205; these read FHQKNNKLLKENTDMKEKLQQLSAELTHMSTKEK and IEEK…KEKL. Composition is skewed to basic and acidic residues over residues 234 to 243 and 282 to 293; these read GTKQKEKTEE and AKSHTIEELKNR. Disordered regions lie at residues 234 to 253 and 274 to 293; these read GTKQKEKTEEEAPAAYAQPN and AHAQSSDQAKSHTIEELKNR.

The sequence is that of Sporulation protein cse15 (cse15) from Bacillus subtilis (strain 168).